The chain runs to 464 residues: Plant intracellular Ras-group-related LRR protein 3 (464 aa).

A coiled-coil region spans residues 106–138 (AAVVSLEEVHEGYEKQLRDLEEEIGRVYASAVE). LRR repeat units follow at residues 160 to 183 (GGVV…LGKI), 184 to 206 (VGLV…ISGL), 207 to 230 (EKLE…GLLL), 232 to 252 (LRIL…IAQC), 254 to 275 (SLVE…FGYG), 276 to 299 (LLNL…ICEM), 301 to 322 (SLRY…IGRL), 323 to 347 (TNLE…ISDL), 348 to 370 (ANLR…FFRL), and 372 to 393 (KLEK…MVNQ). Residues 398-406 (VREFMRKRW) carry the GVYW; degenerate motif.

It belongs to the SHOC2 family. As to expression, widely expressed.

Leucine-rich repeat protein that likely mediates protein interactions, possibly in the context of signal transduction. This is Plant intracellular Ras-group-related LRR protein 3 (PIRL3) from Arabidopsis thaliana (Mouse-ear cress).